The sequence spans 92 residues: Large ribosomal subunit protein bL27 (92 aa).

Positions 1-9 (MLKLNLQFF) are excised as a propeptide. The disordered stretch occupies residues 14–34 (GVGSTKNGRDSQSKRLGAKRA).

Belongs to the bacterial ribosomal protein bL27 family. Post-translationally, the N-terminus is cleaved by ribosomal processing cysteine protease Prp.

This Exiguobacterium sibiricum (strain DSM 17290 / CCUG 55495 / CIP 109462 / JCM 13490 / 255-15) protein is Large ribosomal subunit protein bL27.